Here is a 623-residue protein sequence, read N- to C-terminus: Chaperone protein DnaK (623 aa).

Residue Thr175 is modified to Phosphothreonine; by autocatalysis. The disordered stretch occupies residues 580–623; the sequence is PEGAQGAGFDPNNMGGANAGNASAGNDKKDDNVVDADFKVEDDK. Residues 591–604 show a composition bias toward low complexity; the sequence is NNMGGANAGNASAG. The span at 605-623 shows a compositional bias: basic and acidic residues; sequence NDKKDDNVVDADFKVEDDK.

Belongs to the heat shock protein 70 family.

Acts as a chaperone. This is Chaperone protein DnaK from Clostridium botulinum (strain Hall / ATCC 3502 / NCTC 13319 / Type A).